The following is a 968-amino-acid chain: RNA polymerase-associated protein RapA (968 aa).

The 171-residue stretch at 164 to 334 folds into the Helicase ATP-binding domain; it reads DVGRRHAPRV…FARLRLLDPN (171 aa). 177 to 184 is an ATP binding site; sequence DEVGLGKT. The short motif at 280–283 is the DEAH box element; the sequence is DEAH. A Helicase C-terminal domain is found at 490-662; sequence RVEWLMGYLT…YLASPDQTEG (173 aa).

Belongs to the SNF2/RAD54 helicase family. RapA subfamily. In terms of assembly, interacts with the RNAP. Has a higher affinity for the core RNAP than for the holoenzyme. Its ATPase activity is stimulated by binding to RNAP.

In terms of biological role, transcription regulator that activates transcription by stimulating RNA polymerase (RNAP) recycling in case of stress conditions such as supercoiled DNA or high salt concentrations. Probably acts by releasing the RNAP, when it is trapped or immobilized on tightly supercoiled DNA. Does not activate transcription on linear DNA. Probably not involved in DNA repair. In Escherichia fergusonii (strain ATCC 35469 / DSM 13698 / CCUG 18766 / IAM 14443 / JCM 21226 / LMG 7866 / NBRC 102419 / NCTC 12128 / CDC 0568-73), this protein is RNA polymerase-associated protein RapA.